Consider the following 115-residue polypeptide: Colicin-Ib immunity protein (115 aa).

Transmembrane regions (helical) follow at residues Val-7–Gly-27, Phe-38–Ile-58, and Ile-87–Ile-107.

It is found in the cell membrane. This protein is able to protect a cell, which harbors the plasmid IncI1 ColIb-P9 encoding colicin Ib, against colicin Ib. The polypeptide is Colicin-Ib immunity protein (Escherichia coli).